Here is a 787-residue protein sequence, read N- to C-terminus: Formate acetyltransferase (787 aa).

The 622-residue stretch at 8 to 629 (NIFEQAWDGF…GNSPVHKGVF (622 aa)) folds into the PFL domain. Cysteine 416 acts as the S-acetylcysteine intermediate in catalysis. Cysteine 417 acts as the Cysteine radical intermediate in catalysis. A Glycine radical domain is found at 645–774 (SPGANPSNKA…LTERVFHEVL (130 aa)). At glycine 749 the chain carries Glycine radical.

Belongs to the glycyl radical enzyme (GRE) family. PFL subfamily. In terms of assembly, homodimer.

It localises to the cytoplasm. The enzyme catalyses formate + acetyl-CoA = pyruvate + CoA. It functions in the pathway fermentation; pyruvate fermentation; formate from pyruvate: step 1/1. The chain is Formate acetyltransferase (pfl) from Lactococcus lactis subsp. cremoris (strain MG1363).